The following is a 209-amino-acid chain: Dual specificity protein phosphatase 22 (209 aa).

One can recognise a Tyrosine-protein phosphatase domain in the interval 4–144 (GMNKILPSLF…LEDFGKHDVY (141 aa)). The Phosphocysteine intermediate role is filled by Cys-88. Residues 170 to 193 (DKHKQQEAAESQSATSSGRQWSSH) are disordered. The span at 177-193 (AAESQSATSSGRQWSSH) shows a compositional bias: low complexity.

Belongs to the protein-tyrosine phosphatase family. Non-receptor class dual specificity subfamily.

It localises to the cytoplasm. The protein resides in the nucleus. The enzyme catalyses O-phospho-L-tyrosyl-[protein] + H2O = L-tyrosyl-[protein] + phosphate. It catalyses the reaction O-phospho-L-seryl-[protein] + H2O = L-seryl-[protein] + phosphate. The catalysed reaction is O-phospho-L-threonyl-[protein] + H2O = L-threonyl-[protein] + phosphate. In terms of biological role, activates the Jnk signaling pathway. Dephosphorylates and deactivates p38 and stress-activated protein kinase/c-Jun N-terminal kinase (SAPK/JNK). The chain is Dual specificity protein phosphatase 22 (dusp22) from Xenopus tropicalis (Western clawed frog).